Reading from the N-terminus, the 315-residue chain is Cobalamin biosynthesis protein CobD (315 aa).

A run of 5 helical transmembrane segments spans residues 54 to 74 (GLLF…ILFL), 78 to 98 (IAYW…LAMT), 152 to 172 (ADGV…LALM), 203 to 223 (IANF…SFIL), and 295 to 315 (LLYM…LLLF).

The protein belongs to the CobD/CbiB family.

Its subcellular location is the cell membrane. The protein operates within cofactor biosynthesis; adenosylcobalamin biosynthesis. Functionally, converts cobyric acid to cobinamide by the addition of aminopropanol on the F carboxylic group. The polypeptide is Cobalamin biosynthesis protein CobD (Listeria monocytogenes serovar 1/2a (strain ATCC BAA-679 / EGD-e)).